We begin with the raw amino-acid sequence, 199 residues long: Octanoyltransferase (199 aa).

The BPL/LPL catalytic domain maps to 27–199 (SNSYDELWLL…FVQYFLTQFK (173 aa)). Residues 66-73 (RGGQVTYH), 133-135 (SIG), and 146-148 (GIA) each bind substrate. C164 (acyl-thioester intermediate) is an active-site residue.

The protein belongs to the LipB family.

It localises to the cytoplasm. It catalyses the reaction octanoyl-[ACP] + L-lysyl-[protein] = N(6)-octanoyl-L-lysyl-[protein] + holo-[ACP] + H(+). The protein operates within protein modification; protein lipoylation via endogenous pathway; protein N(6)-(lipoyl)lysine from octanoyl-[acyl-carrier-protein]: step 1/2. Functionally, catalyzes the transfer of endogenously produced octanoic acid from octanoyl-acyl-carrier-protein onto the lipoyl domains of lipoate-dependent enzymes. Lipoyl-ACP can also act as a substrate although octanoyl-ACP is likely to be the physiological substrate. This is Octanoyltransferase from Legionella pneumophila (strain Lens).